We begin with the raw amino-acid sequence, 780 residues long: ATP-dependent 6-phosphofructokinase, liver type (780 aa).

Alanine 2 carries the post-translational modification N-acetylalanine. The N-terminal catalytic PFK domain 1 stretch occupies residues 2-390 (ATVDLEKLRM…NWKIYKLLAH (389 aa)). ATP is bound by residues glycine 25, 88–89 (RC), and 118–121 (GDGS). A Mg(2+)-binding site is contributed by aspartate 119. Residues 164-166 (SID), arginine 201, 208-210 (MGR), glutamate 264, arginine 292, and 298-301 (HVQR) contribute to the substrate site. The active-site Proton acceptor is the aspartate 166. The residue at position 377 (serine 377) is a Phosphoserine. Residues 391–400 (QKVSKEKSNF) form an interdomain linker region. The segment at 401–780 (SLAILNVGAP…RRTLSIDKGF (380 aa)) is C-terminal regulatory PFK domain 2. Beta-D-fructose 2,6-bisphosphate-binding positions include arginine 470, 527-531 (TISNN), arginine 565, 572-574 (MGG), and glutamate 628. A glycan (O-linked (GlcNAc) serine) is linked at serine 529. Tyrosine 640 bears the Phosphotyrosine mark. Beta-D-fructose 2,6-bisphosphate-binding positions include arginine 654, 660–663 (HLQQ), and arginine 734. Serine 775 is subject to Phosphoserine.

Belongs to the phosphofructokinase type A (PFKA) family. ATP-dependent PFK group I subfamily. Eukaryotic two domain clade 'E' sub-subfamily. Homo- and heterotetramers. Phosphofructokinase (PFK) enzyme functions as a tetramer composed of different combinations of 3 types of subunits, called PFKM (M), PFKL (L) and PFKP (P). The composition of the PFK tetramer differs according to the tissue type it is present in. The kinetic and regulatory properties of the tetrameric enzyme are dependent on the subunit composition, hence can vary across tissues. It depends on Mg(2+) as a cofactor. GlcNAcylation at Ser-529 by OGT decreases enzyme activity, leading to redirect glucose flux through the oxidative pentose phosphate pathway. Glycosylation is stimulated by both hypoxia and glucose deprivation.

It is found in the cytoplasm. The enzyme catalyses beta-D-fructose 6-phosphate + ATP = beta-D-fructose 1,6-bisphosphate + ADP + H(+). Its pathway is carbohydrate degradation; glycolysis; D-glyceraldehyde 3-phosphate and glycerone phosphate from D-glucose: step 3/4. Allosterically activated by ADP, AMP, or fructose 2,6-bisphosphate, and allosterically inhibited by ATP or citrate. GlcNAcylation by OGT overcomes allosteric regulation. In terms of biological role, catalyzes the phosphorylation of D-fructose 6-phosphate to fructose 1,6-bisphosphate by ATP, the first committing step of glycolysis. Negatively regulates the phagocyte oxidative burst in response to bacterial infection by controlling cellular NADPH biosynthesis and NADPH oxidase-derived reactive oxygen species. Upon macrophage activation, drives the metabolic switch toward glycolysis, thus preventing glucose turnover that produces NADPH via pentose phosphate pathway. The protein is ATP-dependent 6-phosphofructokinase, liver type of Mus musculus (Mouse).